The chain runs to 401 residues: G2/mitotic-specific cyclin-B1 (401 aa).

2 disordered regions span residues 1–30 and 84–103; these read MALRVTRNRLASTRAEQGGKTCSVSGPTLK and KVQVPAQPEPASPTPMETSG. Over residues 9-26 the composition is skewed to polar residues; it reads RLASTRAEQGGKTCSVSG.

Belongs to the cyclin family. Cyclin AB subfamily. Interacts with the CDK1 protein kinase to form a serine/threonine kinase holoenzyme complex also known as maturation promoting factor (MPF). The cyclin subunit imparts substrate specificity to the complex.

Functionally, essential for the control of the cell cycle at the G2/M (mitosis) transition. This Oryzias javanicus (Javanese ricefish) protein is G2/mitotic-specific cyclin-B1 (ccnb1).